A 208-amino-acid chain; its full sequence is LexA repressor (208 aa).

The H-T-H motif DNA-binding region spans 28-48; the sequence is RAEIARELGFRSANAAEEHLK. Catalysis depends on for autocatalytic cleavage activity residues serine 125 and lysine 162.

This sequence belongs to the peptidase S24 family. Homodimer.

The catalysed reaction is Hydrolysis of Ala-|-Gly bond in repressor LexA.. Functionally, represses a number of genes involved in the response to DNA damage (SOS response), including recA and lexA. In the presence of single-stranded DNA, RecA interacts with LexA causing an autocatalytic cleavage which disrupts the DNA-binding part of LexA, leading to derepression of the SOS regulon and eventually DNA repair. This Aliivibrio fischeri (strain ATCC 700601 / ES114) (Vibrio fischeri) protein is LexA repressor.